Here is a 256-residue protein sequence, read N- to C-terminus: 5-keto-4-deoxy-D-glucarate aldolase (256 aa).

The active-site Proton acceptor is the His-50. Gln-151 is a substrate binding site. Glu-153 contacts Mg(2+). Residues Ser-178 and Asp-179 each coordinate substrate. Mg(2+) is bound at residue Asp-179.

The protein belongs to the HpcH/HpaI aldolase family. KDGluc aldolase subfamily. Homohexamer; trimer of dimers. The cofactor is Mg(2+).

The enzyme catalyses 5-dehydro-4-deoxy-D-glucarate = 2-hydroxy-3-oxopropanoate + pyruvate. It carries out the reaction 2-dehydro-3-deoxy-D-glucarate = 2-hydroxy-3-oxopropanoate + pyruvate. It participates in carbohydrate acid metabolism; galactarate degradation; D-glycerate from galactarate: step 2/3. In terms of biological role, catalyzes the reversible retro-aldol cleavage of both 5-keto-4-deoxy-D-glucarate and 2-keto-3-deoxy-D-glucarate to pyruvate and tartronic semialdehyde. The chain is 5-keto-4-deoxy-D-glucarate aldolase from Escherichia coli O6:H1 (strain CFT073 / ATCC 700928 / UPEC).